We begin with the raw amino-acid sequence, 689 residues long: Glycine--tRNA ligase beta subunit (689 aa).

It belongs to the class-II aminoacyl-tRNA synthetase family. In terms of assembly, tetramer of two alpha and two beta subunits.

It localises to the cytoplasm. The catalysed reaction is tRNA(Gly) + glycine + ATP = glycyl-tRNA(Gly) + AMP + diphosphate. The sequence is that of Glycine--tRNA ligase beta subunit from Actinobacillus succinogenes (strain ATCC 55618 / DSM 22257 / CCUG 43843 / 130Z).